A 1035-amino-acid chain; its full sequence is Glycine dehydrogenase (decarboxylating), mitochondrial (1035 aa).

The transit peptide at Met-1–Ser-64 directs the protein to the mitochondrion. Lys-771 bears the N6-(pyridoxal phosphate)lysine mark.

It belongs to the GcvP family. In terms of assembly, homodimer. The glycine cleavage system is composed of four proteins: P, T, L and H. Pyridoxal 5'-phosphate serves as cofactor.

The protein localises to the mitochondrion. The enzyme catalyses N(6)-[(R)-lipoyl]-L-lysyl-[glycine-cleavage complex H protein] + glycine + H(+) = N(6)-[(R)-S(8)-aminomethyldihydrolipoyl]-L-lysyl-[glycine-cleavage complex H protein] + CO2. Its function is as follows. The glycine cleavage system catalyzes the degradation of glycine. The P protein binds the alpha-amino group of glycine through its pyridoxal phosphate cofactor; CO(2) is released and the remaining methylamine moiety is then transferred to the lipoamide cofactor of the H protein. The polypeptide is Glycine dehydrogenase (decarboxylating), mitochondrial (GDCSP) (Solanum tuberosum (Potato)).